The following is a 30-amino-acid chain: Varv peptide H (30 aa).

A cross-link (cyclopeptide (Gly-Asn)) is located at residues 1 to 30 (GLPVCGETCFGGTCNTPGCSCETWPVCSRN). Disulfide bonds link cysteine 5/cysteine 19, cysteine 9/cysteine 21, and cysteine 14/cysteine 27.

In terms of processing, this is a cyclic peptide.

In terms of biological role, probably participates in a plant defense mechanism. In Viola arvensis (European field pansy), this protein is Varv peptide H.